Reading from the N-terminus, the 190-residue chain is Shikimate kinase (190 aa).

26–31 (GSGKST) serves as a coordination point for ATP. A Mg(2+)-binding site is contributed by S30. Positions 48, 72, and 94 each coordinate substrate. Position 133 (R133) interacts with ATP. Residue R152 participates in substrate binding.

This sequence belongs to the shikimate kinase family. Monomer. Mg(2+) is required as a cofactor.

Its subcellular location is the cytoplasm. It catalyses the reaction shikimate + ATP = 3-phosphoshikimate + ADP + H(+). The protein operates within metabolic intermediate biosynthesis; chorismate biosynthesis; chorismate from D-erythrose 4-phosphate and phosphoenolpyruvate: step 5/7. In terms of biological role, catalyzes the specific phosphorylation of the 3-hydroxyl group of shikimic acid using ATP as a cosubstrate. The sequence is that of Shikimate kinase from Prochlorococcus marinus (strain SARG / CCMP1375 / SS120).